We begin with the raw amino-acid sequence, 22 residues long: Unknown protein from spot 168 of 2D-PAGE of etiolated coleoptile (22 aa).

This is Unknown protein from spot 168 of 2D-PAGE of etiolated coleoptile from Zea mays (Maize).